The chain runs to 241 residues: Fatty acid metabolism regulator protein (241 aa).

Residues 11 to 79 (QSPAALAEEY…HGKPTKVNNI (69 aa)) form the HTH gntR-type domain. Positions 39 to 58 (ERDLADKIGVTRTTLREVLQ) form a DNA-binding region, H-T-H motif.

Homodimer.

It localises to the cytoplasm. Its function is as follows. Multifunctional regulator of fatty acid metabolism. The chain is Fatty acid metabolism regulator protein from Haemophilus influenzae (strain PittEE).